The following is a 632-amino-acid chain: tRNA uridine 5-carboxymethylaminomethyl modification enzyme MnmG (632 aa).

FAD contacts are provided by residues 13–18 (GGGHAG), V125, and S180. 273–287 (GPRYCPSIEDKVMRF) is a binding site for NAD(+). Q370 serves as a coordination point for FAD.

Belongs to the MnmG family. Homodimer. Heterotetramer of two MnmE and two MnmG subunits. It depends on FAD as a cofactor.

It is found in the cytoplasm. Functionally, NAD-binding protein involved in the addition of a carboxymethylaminomethyl (cmnm) group at the wobble position (U34) of certain tRNAs, forming tRNA-cmnm(5)s(2)U34. In Proteus mirabilis (strain HI4320), this protein is tRNA uridine 5-carboxymethylaminomethyl modification enzyme MnmG.